The primary structure comprises 500 residues: Glycerol kinase (500 aa).

T11 provides a ligand contact to ADP. Positions 11, 12, and 13 each coordinate ATP. Residue T11 coordinates sn-glycerol 3-phosphate. Residue R15 participates in ADP binding. Positions 81, 82, 133, and 242 each coordinate sn-glycerol 3-phosphate. Glycerol-binding residues include R81, E82, Y133, D242, and Q243. 2 residues coordinate ADP: T264 and G307. T264, G307, Q311, and G411 together coordinate ATP. ADP is bound at residue G411.

The protein belongs to the FGGY kinase family.

The catalysed reaction is glycerol + ATP = sn-glycerol 3-phosphate + ADP + H(+). The protein operates within polyol metabolism; glycerol degradation via glycerol kinase pathway; sn-glycerol 3-phosphate from glycerol: step 1/1. Inhibited by fructose 1,6-bisphosphate (FBP). Functionally, key enzyme in the regulation of glycerol uptake and metabolism. Catalyzes the phosphorylation of glycerol to yield sn-glycerol 3-phosphate. This Rhodopseudomonas palustris (strain ATCC BAA-98 / CGA009) protein is Glycerol kinase.